We begin with the raw amino-acid sequence, 176 residues long: uncharacterized protein (176 aa).

Positions 15 to 28 (TSSNPPASASQSTG) are enriched in polar residues. Disordered stretches follow at residues 15 to 100 (TSSN…TSAG) and 125 to 176 (ASLR…NLGA). Positions 43–52 (FIDKVTDKPS) are enriched in basic and acidic residues.

This is an uncharacterized protein from Homo sapiens (Human).